Consider the following 239-residue polypeptide: Small ribosomal subunit protein uS2c (239 aa).

This sequence belongs to the universal ribosomal protein uS2 family.

The protein resides in the plastid. The protein localises to the organellar chromatophore. The sequence is that of Small ribosomal subunit protein uS2c (rps2) from Paulinella chromatophora.